The chain runs to 296 residues: Transmembrane protein 156 (296 aa).

The Cytoplasmic segment spans residues 1-4 (MTKT). The chain crosses the membrane as a helical span at residues 5-25 (ALLKLFVAIVITFILILPEYF). Over 26-211 (KTPKERTLEL…EMDIKNITCS (186 aa)) the chain is Extracellular. 2 N-linked (GlcNAc...) asparagine glycosylation sites follow: Asn45 and Asn156. A helical transmembrane segment spans residues 212–232 (MKITWYILVLLVFIFLIILTI). Over 233–296 (RKILEGQRRV…QEVLPPIPEL (64 aa)) the chain is Cytoplasmic.

The protein resides in the membrane. This Homo sapiens (Human) protein is Transmembrane protein 156 (TMEM156).